Here is a 223-residue protein sequence, read N- to C-terminus: MIVTQDKALANVFRQMATGAFPPVVETFERNKTIFFPGDPAERVYFLLKGAVKLSRVYEAGEEITVALLRENSVFGVLSLLTGNKSDRFYHAVAFTPVELLSAPIEQVEQALKENPELSMLMLRGLSSRILQTEMMIETLAHRDMGSRLVSFLLILCRDFGVPCADGITIDLKLSHQAIAEAIGSTRVTVTRLLGDLREKKMISIHKKKITVHKPVTLSRQFT.

One can recognise an HTH crp-type domain in the interval 143-216; that stretch reads RDMGSRLVSF…KKKITVHKPV (74 aa). The H-T-H motif DNA-binding region spans 176–195; sequence HQAIAEAIGSTRVTVTRLLG.

Functionally, required for full expression of proteins subject to ammonium repression. Transcriptional activator of genes subject to nitrogen control. Has affinity for the xisA upstream region. Binds to a 66 bp region containing three repeats of the consensus recognition sequence 5'-ACATT-3'. The polypeptide is Global nitrogen regulator (ntcA) (Nostoc sp. (strain PCC 7120 / SAG 25.82 / UTEX 2576)).